Consider the following 428-residue polypeptide: Protein terminus (428 aa).

The C3H1-type zinc-finger motif lies at 325–346 (CRRCRTQFSRRSKLHIHQKLRC).

The sequence is that of Protein terminus (term) from Drosophila melanogaster (Fruit fly).